The following is a 393-amino-acid chain: Short chain dehydrogenase sirQ (393 aa).

Leu-54 contacts NADP(+). The active-site Proton donor is the Ser-233. Lys-259 serves as the catalytic Lowers pKa of active site Tyr. Ala-286 provides a ligand contact to NADP(+).

The protein belongs to the short-chain dehydrogenases/reductases (SDR) family. Highly divergent.

Its pathway is mycotoxin biosynthesis. In terms of biological role, short chain dehydrogenase; part of the gene cluster that mediates the biosynthesis of sirodesmin PL, an epipolythiodioxopiperazine (ETP) characterized by a disulfide bridged cyclic dipeptide and that acts as a phytotoxin which is involved in the blackleg didease of canola. SirD catalyzes the O-prenylation of L-tyrosine (L-Tyr) in the presence of dimethylallyl diphosphate (DMAPP) to yield 4-O-dimethylallyl-L-Tyr, and therefore represents probably the first pathway-specific enzyme in the biosynthesis of sirodesmin PL. 4-O-dimethylallyl-L-Tyr, then undergoes condensation with L-Ser in a reaction catalyzed by the non-ribosomal peptide synthase sirP to form the diketopiperazine (DKP) backbone. Further bishydroxylation of the DKP performed by the cytochrome P450 monooxygenase sirC leads to the production of the intermediate phomamide. This step is essential to form the reactive thiol group required for toxicity of sirodesmin PL. The next steps of sirodesmin biosynthesis are not well understood yet, but some predictions could be made from intermediate compounds identification. Phomamide is converted into phomalizarine via oxidation, probably by sirT. Further oxidation, methylation (by sirM or sirN) and reduction steps convert phomalizarine to deacetyl sirodesmin. Finally, acetyltransferase sirH probably acetylates deacetyl sirodesmin to produce sirodesmin PL. The sequence is that of Short chain dehydrogenase sirQ from Leptosphaeria maculans (Blackleg fungus).